A 105-amino-acid polypeptide reads, in one-letter code: uncharacterized protein (105 aa).

Transmembrane regions (helical) follow at residues Val-7 to Leu-26 and Val-30 to Ile-52.

The protein localises to the cell membrane. This is an uncharacterized protein from Archaeoglobus fulgidus (strain ATCC 49558 / DSM 4304 / JCM 9628 / NBRC 100126 / VC-16).